A 91-amino-acid polypeptide reads, in one-letter code: Large ribosomal subunit protein uL23 (91 aa).

Belongs to the universal ribosomal protein uL23 family. Part of the 50S ribosomal subunit. Contacts protein L29, and trigger factor when it is bound to the ribosome.

One of the early assembly proteins it binds 23S rRNA. One of the proteins that surrounds the polypeptide exit tunnel on the outside of the ribosome. Forms the main docking site for trigger factor binding to the ribosome. This is Large ribosomal subunit protein uL23 from Macrococcus caseolyticus (strain JCSC5402) (Macrococcoides caseolyticum).